Consider the following 402-residue polypeptide: MKLEKLPEEFVQAQPVLEKISEHGFEAYFVGGSVRDVLLGREIHDVDIATSAYPEEIKDIFPYTIDVGIEHGTVLVLAGKSEAEHYEITTFRTESKYTDYRRPDHVDFVRDLREDLKRRDFTVNAFACDFEGQIIDLFDGLTDLKERRLTAVGSALERFNEDALRIMRAMRFASTLDFKIEEKTFSAMRERSHLLEKISVERIFIELDKLLLGSEWRNGLTLLIESEAWKYLPDFQDLALKKVLTELSVDFHFKNSEQAWAALLTRFSNIDVKVFLRKWKVSNEFSKYVADLVSAYELENWDLVSLYHFGLEKALLVDELKIAFGRDIDRERAVFINDQLQIHDKSEIVIAGKDLMDEFSLKPGPELGKILKTIEEKIVKNELKNEQIAILTEVKKMLELEK.

The ATP site is built by Gly-32 and Arg-35. CTP is bound by residues Gly-32 and Arg-35. Residues Asp-45 and Asp-47 each coordinate Mg(2+). The ATP site is built by Arg-119, Asp-162, Arg-165, Arg-168, and Arg-171. CTP contacts are provided by Arg-119, Asp-162, Arg-165, Arg-168, and Arg-171.

It belongs to the tRNA nucleotidyltransferase/poly(A) polymerase family. Bacterial CCA-adding enzyme type 3 subfamily. As to quaternary structure, homodimer. The cofactor is Mg(2+).

The enzyme catalyses a tRNA precursor + 2 CTP + ATP = a tRNA with a 3' CCA end + 3 diphosphate. The catalysed reaction is a tRNA with a 3' CCA end + 2 CTP + ATP = a tRNA with a 3' CCACCA end + 3 diphosphate. Functionally, catalyzes the addition and repair of the essential 3'-terminal CCA sequence in tRNAs without using a nucleic acid template. Adds these three nucleotides in the order of C, C, and A to the tRNA nucleotide-73, using CTP and ATP as substrates and producing inorganic pyrophosphate. tRNA 3'-terminal CCA addition is required both for tRNA processing and repair. Also involved in tRNA surveillance by mediating tandem CCA addition to generate a CCACCA at the 3' terminus of unstable tRNAs. While stable tRNAs receive only 3'-terminal CCA, unstable tRNAs are marked with CCACCA and rapidly degraded. This Lactococcus lactis subsp. cremoris (strain SK11) protein is CCA-adding enzyme.